We begin with the raw amino-acid sequence, 604 residues long: Netrin-1 (604 aa).

Positions Met1–Gly24 are cleaved as a signal peptide. One can recognise a Laminin N-terminal domain in the interval His47–Arg284. N-linked (GlcNAc...) asparagine glycosylation is found at Asn95, Asn116, and Asn131. Disulfide bonds link Cys119/Cys152, Cys285/Cys294, Cys287/Cys304, Cys306/Cys315, Cys318/Cys338, Cys341/Cys350, Cys343/Cys368, Cys371/Cys380, Cys383/Cys401, Cys404/Cys416, Cys406/Cys423, Cys425/Cys434, Cys437/Cys451, Cys472/Cys544, and Cys491/Cys601. 3 Laminin EGF-like domains span residues Cys285 to Ala340, Cys341 to Ala403, and Cys404 to Lys453. An N-linked (GlcNAc...) asparagine glycan is attached at Asn417. The NTR domain occupies Cys472–Cys601. The Cell attachment site motif lies at Arg530 to Asp532.

Binds to its receptors; DCC, UNC5A, UNC5B, UNC5C and probably UNC5D. Binds to its receptor; DSCAM. Interacts with DCC. Interacts with APP. In terms of tissue distribution, widely expressed in normal adult tissues with highest levels in heart, small intestine, colon, liver and prostate. Reduced expression in brain tumors and neuroblastomas. Expressed in epididymis (at protein level).

It is found in the secreted. It localises to the cytoplasm. Functionally, netrins control guidance of CNS commissural axons and peripheral motor axons. Its association with either DCC or some UNC5 receptors will lead to axon attraction or repulsion, respectively. Binding to UNC5C might cause dissociation of UNC5C from polymerized TUBB3 in microtubules and thereby lead to increased microtubule dynamics and axon repulsion. Involved in dorsal root ganglion axon projection towards the spinal cord. It also serves as a survival factor via its association with its receptors which prevent the initiation of apoptosis. Involved in tumorigenesis by regulating apoptosis. In Homo sapiens (Human), this protein is Netrin-1 (NTN1).